We begin with the raw amino-acid sequence, 617 residues long: 1-deoxy-D-xylulose-5-phosphate synthase (617 aa).

Thiamine diphosphate-binding positions include His-77 and 118–120; that span reads GHS. Asp-149 lines the Mg(2+) pocket. Thiamine diphosphate contacts are provided by residues 150-151, Asn-178, Tyr-286, and Glu-367; that span reads GA. Residue Asn-178 participates in Mg(2+) binding.

The protein belongs to the transketolase family. DXPS subfamily. Homodimer. Requires Mg(2+) as cofactor. The cofactor is thiamine diphosphate.

It catalyses the reaction D-glyceraldehyde 3-phosphate + pyruvate + H(+) = 1-deoxy-D-xylulose 5-phosphate + CO2. It functions in the pathway metabolic intermediate biosynthesis; 1-deoxy-D-xylulose 5-phosphate biosynthesis; 1-deoxy-D-xylulose 5-phosphate from D-glyceraldehyde 3-phosphate and pyruvate: step 1/1. In terms of biological role, catalyzes the acyloin condensation reaction between C atoms 2 and 3 of pyruvate and glyceraldehyde 3-phosphate to yield 1-deoxy-D-xylulose-5-phosphate (DXP). This is 1-deoxy-D-xylulose-5-phosphate synthase from Actinobacillus pleuropneumoniae serotype 5b (strain L20).